The following is a 64-amino-acid chain: Large ribosomal subunit protein bL35 (64 aa).

The protein belongs to the bacterial ribosomal protein bL35 family.

The chain is Large ribosomal subunit protein bL35 from Kineococcus radiotolerans (strain ATCC BAA-149 / DSM 14245 / SRS30216).